The chain runs to 260 residues: MQRNGLIGDTIRSLGFLSRLPLPQGWFDNTDDSLPRNARAFPLAGGILGLLAGVALLIANAISLPPLAAALIAIGALAAMTGALHEDGLGDTADGFFGASTPDRRLDIMKDSRIGTFAALTLVIWTGVKASLLMAIIARAGAGYALLALIGTEAASRAGMLAFWHALPSARPGGLADSMGQPQWETVVCGCGLGLALLAIGFLPSGGMVALINALVLMTVVLFGFARLCMAKIGGRTGDTLGAAQQIGSLAALIGLVMAL.

The next 7 membrane-spanning stretches (helical) occupy residues 42–62 (PLAGGILGLLAGVALLIANAI), 64–84 (LPPLAAALIAIGALAAMTGAL), 117–137 (FAALTLVIWTGVKASLLMAII), 144–164 (YALLALIGTEAASRAGMLAFW), 192–212 (GLGLALLAIGFLPSGGMVALI), 214–234 (ALVLMTVVLFGFARLCMAKIG), and 240–260 (TLGAAQQIGSLAALIGLVMAL).

This sequence belongs to the CobS family. The cofactor is Mg(2+).

The protein localises to the cell inner membrane. The enzyme catalyses alpha-ribazole + adenosylcob(III)inamide-GDP = adenosylcob(III)alamin + GMP + H(+). It catalyses the reaction alpha-ribazole 5'-phosphate + adenosylcob(III)inamide-GDP = adenosylcob(III)alamin 5'-phosphate + GMP + H(+). Its pathway is cofactor biosynthesis; adenosylcobalamin biosynthesis; adenosylcobalamin from cob(II)yrinate a,c-diamide: step 7/7. Its function is as follows. Joins adenosylcobinamide-GDP and alpha-ribazole to generate adenosylcobalamin (Ado-cobalamin). Also synthesizes adenosylcobalamin 5'-phosphate from adenosylcobinamide-GDP and alpha-ribazole 5'-phosphate. This is Adenosylcobinamide-GDP ribazoletransferase from Brucella melitensis biotype 1 (strain ATCC 23456 / CCUG 17765 / NCTC 10094 / 16M).